A 391-amino-acid polypeptide reads, in one-letter code: MGAVPGVVLLLMLAVLGIRAAPAPEECHKLTKPVLKADVQNVSGDWVLVWSVANTTERWICENLTSSYVEFKLHSDIIEYTERNLFLGNSCISFYSNLSASTEKQQQFSLNNLQMEEKGVVRPFNDNGTVKFFETCVDCLSMEYSGDIGRFLLIYRRDGVHQNVEVLKAARDESQKLAECLGFSIDEPFIYDGVSDFCHKKSPEECHKLTKPVTKADVQSVSGDWVLVWSVAENISTSNEWTKLKSSHVELRIHSGVIVLNERNMLKNNSCMTFKTNMTAGPESQNTFIYTSGKMEENGVDKELDENGTVKFFETCADCLSIDYSGLFGHVLFVYRRDGVHQNVEVLKAAQDESQKLAECLGFSIGEPFIYDGVSDFCHKKSSPEVKPEQD.

The signal sequence occupies residues 1-20 (MGAVPGVVLLLMLAVLGIRA). Repeat copies occupy residues 24–202 (PEEC…HKKS) and 203–391 (PEEC…PEQD). Asparagine 41, asparagine 54, asparagine 63, asparagine 97, asparagine 234, asparagine 268, asparagine 277, and asparagine 307 each carry an N-linked (GlcNAc...) asparagine glycan.

Homodimer or heterodimer of PSTBP1 and PSTBP2. Glycosylated.

Its subcellular location is the secreted. Binds both saxitoxin and tetradotoxin. May play a role in toxin accumulation and/or excretion. The chain is Saxitoxin and tetrodotoxin-binding protein 2 (psbp2) from Takifugu pardalis (Panther puffer).